Reading from the N-terminus, the 70-residue chain is uncharacterized protein (70 aa).

This is an uncharacterized protein from Rickettsia conorii (strain ATCC VR-613 / Malish 7).